The chain runs to 524 residues: MISPFLLLAIGTCFASSLVPEKEKDPKYWRDQAQQTLKNALRLQTLNTNVAKNVIMFLGDGMGVSTVTAARILKGQLHHSPGEETKLEMDKFPYVALSKTYNTNAQVPDSAGTATAYLCGVKANEGTVGVSAATQRSQCNTTQGNEVTSILRWAKDAGKSVGIVTTTRVNHATPSASYAHSADRDWYSDNEMPPEALSQGCKDIAYQLMHNIKDIEVIMGGGRKYMFPKNRTDVEYELDEKARGTRLDGLNLIDIWKSFKPKHKHSHYVWNRTDLLALDPHSVDYLLGLFEPGDMQYELNRNNATDPSLSEMVEMAIRILNKNPKGFFLLVEGGRIDHGHHEGKAKQALHEAVEMDQAIGQAGAMTSVEDTLTVVTADHSHVFTFGGYTPRGNSIFGLAPMVSDTDKKPFTAILYGNGPGYKVVGGERENVSMVDYAHNNYQAQSAVPLRHETHGGEDVAVFAKGPMAHLLHGVHEQNYIPHVMAYAACIGANRDHCASASSSGSPSPGPLLLLLALLPLGSLF.

The first 17 residues, 1–17 (MISPFLLLAIGTCFASS), serve as a signal peptide directing secretion. Aspartate 60 lines the Mg(2+) pocket. The Zn(2+) site is built by aspartate 60 and serine 110. Serine 110 functions as the Phosphoserine intermediate in the catalytic mechanism. Residue serine 110 is modified to Phosphoserine. Cysteine 139 and cysteine 201 are joined by a disulfide. Residue asparagine 140 is glycosylated (N-linked (GlcNAc...) asparagine). Residue threonine 173 participates in Mg(2+) binding. Asparagine 230 carries an N-linked (GlcNAc...) asparagine glycan. Glutamate 235 lines the Ca(2+) pocket. The N-linked (GlcNAc...) asparagine glycan is linked to asparagine 271. Ca(2+) is bound by residues phenylalanine 290 and glutamate 291. The N-linked (GlcNAc...) asparagine glycan is linked to asparagine 303. A Ca(2+)-binding site is contributed by aspartate 306. Residue glutamate 332 participates in Mg(2+) binding. Residues aspartate 337, histidine 341, aspartate 378, and histidine 379 each contribute to the Zn(2+) site. Residue asparagine 430 is glycosylated (N-linked (GlcNAc...) asparagine). A Zn(2+)-binding site is contributed by histidine 454. Cysteine 489 and cysteine 497 are disulfide-bonded. Residue serine 499 is the site of GPI-anchor amidated serine attachment. A propeptide spans 500–524 (ASSSGSPSPGPLLLLLALLPLGSLF) (removed in mature form).

The protein belongs to the alkaline phosphatase family. As to quaternary structure, homodimer. Mg(2+) is required as a cofactor. Requires Zn(2+) as cofactor. It depends on Ca(2+) as a cofactor. In terms of processing, N-glycosylated.

The protein localises to the cell membrane. Its subcellular location is the extracellular vesicle membrane. The protein resides in the mitochondrion membrane. It localises to the mitochondrion intermembrane space. It catalyses the reaction a phosphate monoester + H2O = an alcohol + phosphate. The catalysed reaction is diphosphate + H2O = 2 phosphate + H(+). The enzyme catalyses pyridoxal 5'-phosphate + H2O = pyridoxal + phosphate. It carries out the reaction phosphoethanolamine + H2O = ethanolamine + phosphate. It catalyses the reaction N-phosphocreatine + H2O = creatine + phosphate. The catalysed reaction is ATP + H2O = ADP + phosphate + H(+). The enzyme catalyses ADP + H2O = AMP + phosphate + H(+). It carries out the reaction AMP + H2O = adenosine + phosphate. Phosphatase activity is specifically inhibited by 5-((5-chloro-2-methoxyphenyl)sulfonamido)nicotinamide (SBI-425). Its function is as follows. Alkaline phosphatase that metabolizes various phosphate compounds and plays a key role in skeletal mineralization and adaptive thermogenesis. Has broad substrate specificity and can hydrolyze a considerable variety of compounds: however, only a few substrates, such as diphosphate (inorganic pyrophosphate; PPi), pyridoxal 5'-phosphate (PLP) and N-phosphocreatine are natural substrates. Plays an essential role in skeletal and dental mineralization via its ability to hydrolyze extracellular diphosphate, a potent mineralization inhibitor, to phosphate: it thereby promotes hydroxyapatite crystal formation and increases inorganic phosphate concentration. Acts in a non-redundant manner with PHOSPHO1 in skeletal mineralization: while PHOSPHO1 mediates the initiation of hydroxyapatite crystallization in the matrix vesicles (MVs), ALPL/TNAP catalyzes the spread of hydroxyapatite crystallization in the extracellular matrix. Also promotes dephosphorylation of osteopontin (SSP1), an inhibitor of hydroxyapatite crystallization in its phosphorylated state; it is however unclear whether ALPL/TNAP mediates SSP1 dephosphorylation via a direct or indirect manner. Catalyzes dephosphorylation of PLP to pyridoxal (PL), the transportable form of vitamin B6, in order to provide a sufficient amount of PLP in the brain, an essential cofactor for enzymes catalyzing the synthesis of diverse neurotransmitters. Additionally, also able to mediate ATP degradation in a stepwise manner to adenosine, thereby regulating the availability of ligands for purinergic receptors. Also capable of dephosphorylating microbial products, such as lipopolysaccharides (LPS) as well as other phosphorylated small-molecules, such as poly-inosine:cytosine (poly I:C). Acts as a key regulator of adaptive thermogenesis as part of the futile creatine cycle: localizes to the mitochondria of thermogenic fat cells and acts by mediating hydrolysis of N-phosphocreatine to initiate a futile cycle of creatine dephosphorylation and phosphorylation. During the futile creatine cycle, creatine and N-phosphocreatine are in a futile cycle, which dissipates the high energy charge of N-phosphocreatine as heat without performing any mechanical or chemical work. The protein is Alkaline phosphatase, tissue-nonspecific isozyme (ALPL) of Bos taurus (Bovine).